We begin with the raw amino-acid sequence, 101 residues long: Toxin Tpa8 (101 aa).

An N-terminal signal peptide occupies residues 1-20 (MVKSEMKLVIFSLFLLLIGV). One can recognise an LCN-type CS-alpha/beta domain in the interval 24–98 (KNGYPVIEGG…VMDRTKEYCE (75 aa)). Cystine bridges form between Cys44-Cys70, Cys56-Cys75, Cys60-Cys77, and Cys71-Cys97.

Belongs to the long (4 C-C) scorpion toxin superfamily. Sodium channel inhibitor family. Beta subfamily. Expressed by the venom gland.

Its subcellular location is the secreted. Excitatory insect beta-toxins induce a spastic paralysis. They bind voltage-independently at site-4 of sodium channels (Nav) and shift the voltage of activation toward more negative potentials thereby affecting sodium channel activation and promoting spontaneous and repetitive firing. This Tityus pachyurus (Colombian scorpion) protein is Toxin Tpa8.